We begin with the raw amino-acid sequence, 106 residues long: Ribonuclease P protein component 4 (106 aa).

Zn(2+) is bound by residues C57, C60, C83, and C86.

It belongs to the eukaryotic/archaeal RNase P protein component 4 family. Consists of a catalytic RNA component and at least 4-5 protein subunits. It depends on Zn(2+) as a cofactor.

It is found in the cytoplasm. It catalyses the reaction Endonucleolytic cleavage of RNA, removing 5'-extranucleotides from tRNA precursor.. In terms of biological role, part of ribonuclease P, a protein complex that generates mature tRNA molecules by cleaving their 5'-ends. The protein is Ribonuclease P protein component 4 of Saccharolobus solfataricus (strain ATCC 35092 / DSM 1617 / JCM 11322 / P2) (Sulfolobus solfataricus).